The chain runs to 311 residues: 4-hydroxy-tetrahydrodipicolinate synthase (311 aa).

Thr-49 is a pyruvate binding site. The active-site Proton donor/acceptor is Tyr-138. Lys-166 serves as the catalytic Schiff-base intermediate with substrate. Ile-207 contributes to the pyruvate binding site.

This sequence belongs to the DapA family. In terms of assembly, homotetramer; dimer of dimers.

Its subcellular location is the cytoplasm. It catalyses the reaction L-aspartate 4-semialdehyde + pyruvate = (2S,4S)-4-hydroxy-2,3,4,5-tetrahydrodipicolinate + H2O + H(+). The protein operates within amino-acid biosynthesis; L-lysine biosynthesis via DAP pathway; (S)-tetrahydrodipicolinate from L-aspartate: step 3/4. Catalyzes the condensation of (S)-aspartate-beta-semialdehyde [(S)-ASA] and pyruvate to 4-hydroxy-tetrahydrodipicolinate (HTPA). The chain is 4-hydroxy-tetrahydrodipicolinate synthase from Limosilactobacillus fermentum (strain NBRC 3956 / LMG 18251) (Lactobacillus fermentum).